Consider the following 542-residue polypeptide: Chaperonin GroEL (542 aa).

Residues 29-32 (TLGP), 86-90 (DGTTT), G413, 476-478 (NAA), and D492 contribute to the ATP site. The disordered stretch occupies residues 523-542 (EPAAPAMPGGMDPSMMGGMM). A compositionally biased stretch (low complexity) spans 526–542 (APAMPGGMDPSMMGGMM).

This sequence belongs to the chaperonin (HSP60) family. Forms a cylinder of 14 subunits composed of two heptameric rings stacked back-to-back. Interacts with the co-chaperonin GroES.

It is found in the cytoplasm. It catalyses the reaction ATP + H2O + a folded polypeptide = ADP + phosphate + an unfolded polypeptide.. Together with its co-chaperonin GroES, plays an essential role in assisting protein folding. The GroEL-GroES system forms a nano-cage that allows encapsulation of the non-native substrate proteins and provides a physical environment optimized to promote and accelerate protein folding. This is Chaperonin GroEL from Streptococcus uberis (strain ATCC BAA-854 / 0140J).